Consider the following 295-residue polypeptide: Ventral anterior homeobox 1a (295 aa).

Positions 20 to 33 (ISKPKDNKEIRETQ) are enriched in basic and acidic residues. The disordered stretch occupies residues 20-63 (ISKPKDNKEIRETQAKMPSTYLKEQPGTYPAPGSSELCAKNKSS). Positions 97-156 (PKRSRTSFTAEQLYRLEMEFQRCQYVVGRERTDLSRQLNLSETQVKVWFQNRRTKQKKDQ) form a DNA-binding region, homeobox. Positions 203-226 (RAPNSSGPGTRSLATVTSTPPHQP) are disordered. Over residues 204-222 (APNSSGPGTRSLATVTSTP) the composition is skewed to polar residues.

The protein belongs to the EMX homeobox family.

The protein resides in the nucleus. In terms of biological role, may play a role in the specification and maintenance of basal forebrain identity. In Xenopus laevis (African clawed frog), this protein is Ventral anterior homeobox 1a (vax1-a).